A 500-amino-acid polypeptide reads, in one-letter code: Taxoid 7-beta-hydroxylase (500 aa).

A helical membrane pass occupies residues 24–44 (PAILSTALTAIAGIIVLLVIT). Cys446 contacts heme.

Belongs to the cytochrome P450 family.

It localises to the microsome membrane. The catalysed reaction is taxusin + reduced [NADPH--hemoprotein reductase] + O2 = 7beta-hydroxytaxusin + oxidized [NADPH--hemoprotein reductase] + H2O + H(+). The enzyme catalyses 2alpha-hydroxytaxusin + reduced [NADPH--hemoprotein reductase] + O2 = 2alpha,7beta-dihydroxytaxusin + oxidized [NADPH--hemoprotein reductase] + H2O + H(+). It carries out the reaction 7beta-hydroxytaxusin + reduced [NADPH--hemoprotein reductase] + O2 = 2alpha,7beta-dihydroxytaxusin + oxidized [NADPH--hemoprotein reductase] + H2O + H(+). It functions in the pathway alkaloid biosynthesis; taxol biosynthesis. In terms of biological role, catalyzes the conversion of taxusin to 7-beta-hydroxytaxusin in taxol biosynthesis. Catalyzes the conversion of 2-alpha-hydroxytaxusin to 2-alpha-7-beta-hydroxytaxusin in taxol biosynthesis. In Taxus cuspidata (Japanese yew), this protein is Taxoid 7-beta-hydroxylase.